A 447-amino-acid polypeptide reads, in one-letter code: uncharacterized protein (447 aa).

The disordered stretch occupies residues 39–76; it reads PQAAPYTRNNGMGECRRGHRQGHRAEVHDNRPADKVGQ. Basic and acidic residues predominate over residues 61–72; it reads HRAEVHDNRPAD.

This sequence belongs to the 3-oxoacid CoA-transferase subunit A family.

This is an uncharacterized protein from Archaeoglobus fulgidus (strain ATCC 49558 / DSM 4304 / JCM 9628 / NBRC 100126 / VC-16).